The primary structure comprises 400 residues: GTPase Obg (400 aa).

In terms of domain architecture, Obg spans 1-159 (MKFVDEVQIR…RTLKLELLLL (159 aa)). Positions 160–333 (ADVGMLGLPN…VCYDILDLLD (174 aa)) constitute an OBG-type G domain. GTP is bound by residues 166–173 (GLPNAGKS), 191–195 (FTTLV), 213–216 (DIPG), 283–286 (NKMD), and 314–316 (SAI). Ser-173 and Thr-193 together coordinate Mg(2+).

It belongs to the TRAFAC class OBG-HflX-like GTPase superfamily. OBG GTPase family. As to quaternary structure, monomer. Requires Mg(2+) as cofactor.

It is found in the cytoplasm. In terms of biological role, an essential GTPase which binds GTP, GDP and possibly (p)ppGpp with moderate affinity, with high nucleotide exchange rates and a fairly low GTP hydrolysis rate. Plays a role in control of the cell cycle, stress response, ribosome biogenesis and in those bacteria that undergo differentiation, in morphogenesis control. This chain is GTPase Obg, found in Aeromonas salmonicida (strain A449).